The primary structure comprises 366 residues: MAQRVQEEDEQMTSTDDLIQAEIELYHHCFAFIKSTALRAATDLCISDAIHRNGGAATLSDLALNIGLHPTKLSHLRRLMRVPTVSGVFAVEDHNGEAMYTLTRVSRLLLNGDGERTHALSHLVRVLVNPLTVASHFSIHEWFTIEQAAAMTPFEVAHGCTRWEIIANDAKDGSVFNTAMVEDSRVAMDIILKESCGVFQGISSLVDVGGGHGAAAAAIATAFPNIKCTVLDLPHIVAEAPTTHSNIQFVGGDFFEFIPAADVVLLKYILHAWQDDDCVKILRRCKEAILARDAGGKVIIIEVVVGIGPKEIVPKEMQILFDVFMMYVDGIEREEHEWKKIFLEAGFSDYKITPVLGARSIIEVYP.

Positions 209, 232, 253, and 267 each coordinate S-adenosyl-L-homocysteine. Residue H271 is the Proton acceptor of the active site. Residues E302 and E332 contribute to the active site.

This sequence belongs to the class I-like SAM-binding methyltransferase superfamily. Cation-independent O-methyltransferase family. In terms of assembly, homodimer. As to expression, expressed at low levels in roots, shoots, leaves, stems and flowers.

It localises to the cytoplasm. The enzyme catalyses N-acetylserotonin + S-adenosyl-L-methionine = melatonin + S-adenosyl-L-homocysteine + H(+). It participates in aromatic compound metabolism; melatonin biosynthesis; melatonin from serotonin: step 1/2. Functionally, methyltransferase which catalyzes the transfer of a methyl group onto N-acetylserotonin, producing melatonin (N-acetyl-5-methoxytryptamine). In Oryza sativa subsp. japonica (Rice), this protein is Acetylserotonin O-methyltransferase 3.